Consider the following 263-residue polypeptide: Chymotrypsinogen B (263 aa).

Positions 1 to 18 (MAFLWLVSCFALVGATFG) are cleaved as a signal peptide. 5 disulfide bridges follow: C19–C140, C60–C76, C154–C219, C186–C200, and C209–C238. In terms of domain architecture, Peptidase S1 spans 34-261 (IVNGEDAIPG…LMPWVQQILE (228 aa)). The Charge relay system role is filled by H75. S93 is modified (phosphoserine). The Charge relay system role is filled by D120. Catalysis depends on S213, which acts as the Charge relay system.

It belongs to the peptidase S1 family.

It localises to the secreted. The protein localises to the extracellular space. The enzyme catalyses Preferential cleavage: Tyr-|-Xaa, Trp-|-Xaa, Phe-|-Xaa, Leu-|-Xaa.. This Rattus norvegicus (Rat) protein is Chymotrypsinogen B (Ctrb1).